The primary structure comprises 166 residues: Lutropin subunit beta (166 aa).

An N-terminal signal peptide occupies residues 1–21; the sequence is MGGAQVLLLLTLLGTPLVTHG. Disulfide bonds link Cys-56–Cys-104, Cys-70–Cys-119, Cys-73–Cys-157, Cys-81–Cys-135, Cys-85–Cys-137, and Cys-140–Cys-147. N-linked (GlcNAc...) asparagine glycosylation occurs at Asn-60.

The protein belongs to the glycoprotein hormones subunit beta family. As to quaternary structure, heterodimer of a common alpha chain and a unique beta chain which confers biological specificity to thyrotropin, lutropin, follitropin and gonadotropin.

It localises to the secreted. Functionally, promotes spermatogenesis and ovulation by stimulating the testes and ovaries to synthesize steroids. This is Lutropin subunit beta (LHB) from Coturnix japonica (Japanese quail).